Reading from the N-terminus, the 325-residue chain is MQELRLVLILVGALAIAALLFHGLWTSRKETSSKFGKKVDIDFDSDVDDEQAAPMRGFDQPKEDVVVQKERKEPAFAREEVPTSDDPLFEGTVSSESNKFTEQEKPTVQQAQPQPVVQQVQEPAVGRIEPEAKPVAAPVKREEPTISFSAIDDEVLTQPEPIQAKVDIPETSTYLEPEIIIAEPEPEPEQDVIVINVHGMGSDRFSGNRLFNSLEQNGLVFGDMAIYHRHSDLSGAGKVLFSVANMVSPGHFQVPEGEEFSTPGISFFLPLPCYGDAEHNFKLMLQTAQMVSSELGGNVLDEKRDMLTPNKIDEYKQRVKVFCRK.

Residues 1 to 5 (MQELR) are Periplasmic-facing. A helical transmembrane segment spans residues 6–26 (LVLILVGALAIAALLFHGLWT). Residues 27–325 (SRKETSSKFG…KQRVKVFCRK (299 aa)) lie on the Cytoplasmic side of the membrane.

Belongs to the ZipA family. In terms of assembly, interacts with FtsZ via their C-terminal domains.

The protein localises to the cell inner membrane. In terms of biological role, essential cell division protein that stabilizes the FtsZ protofilaments by cross-linking them and that serves as a cytoplasmic membrane anchor for the Z ring. Also required for the recruitment to the septal ring of downstream cell division proteins. The chain is Cell division protein ZipA from Aliivibrio fischeri (strain MJ11) (Vibrio fischeri).